The primary structure comprises 412 residues: Serine hydroxymethyltransferase (412 aa).

(6S)-5,6,7,8-tetrahydrofolate is bound by residues Leu117 and Gly121–Leu123. Lys226 bears the N6-(pyridoxal phosphate)lysine mark.

This sequence belongs to the SHMT family. As to quaternary structure, homodimer. Pyridoxal 5'-phosphate serves as cofactor.

It localises to the cytoplasm. The enzyme catalyses (6R)-5,10-methylene-5,6,7,8-tetrahydrofolate + glycine + H2O = (6S)-5,6,7,8-tetrahydrofolate + L-serine. It participates in one-carbon metabolism; tetrahydrofolate interconversion. The protein operates within amino-acid biosynthesis; glycine biosynthesis; glycine from L-serine: step 1/1. Its function is as follows. Catalyzes the reversible interconversion of serine and glycine with tetrahydrofolate (THF) serving as the one-carbon carrier. This reaction serves as the major source of one-carbon groups required for the biosynthesis of purines, thymidylate, methionine, and other important biomolecules. Also exhibits THF-independent aldolase activity toward beta-hydroxyamino acids, producing glycine and aldehydes, via a retro-aldol mechanism. The protein is Serine hydroxymethyltransferase of Staphylococcus aureus (strain USA300).